We begin with the raw amino-acid sequence, 161 residues long: Nucleotide-binding protein PFLU_4927 (161 aa).

The protein belongs to the YajQ family.

Its function is as follows. Nucleotide-binding protein. This is Nucleotide-binding protein PFLU_4927 from Pseudomonas fluorescens (strain SBW25).